A 503-amino-acid chain; its full sequence is Glutamate/gamma-aminobutyrate antiporter (503 aa).

33–43 (LHLVFFLLLGG) contacts L-glutamate. A run of 7 helical transmembrane segments spans residues 35-55 (LVFFLLLGGLLWFLPVALCAA), 153-173 (FVVGIVIPSIILFGLAAAYFI), 194-214 (VSTLVVFVSFILAYMGVEASA), 232-252 (ILLVILAISLDAIGGFSVAAV), 366-386 (LTVVIYLVGYLLFFIGYFVLI), 407-427 (IIAGIGFLLSIFALFISFVPP), and 440-460 (MILLISFVVTAILPFIVYELH).

This sequence belongs to the amino acid-polyamine-organocation (APC) superfamily. Glutamate:GABA antiporter (GGA) (TC 2.A.3.7) family.

The protein localises to the cell membrane. The enzyme catalyses 4-aminobutanoate(in) + L-glutamate(out) = 4-aminobutanoate(out) + L-glutamate(in). Its function is as follows. Involved in glutaminase-dependent acid resistance. Exchanges extracellular glutamate (Glu) for intracellular gamma-aminobutyric acid (GABA) under acidic conditions. This chain is Glutamate/gamma-aminobutyrate antiporter (gadC), found in Lactococcus lactis subsp. lactis (strain IL1403) (Streptococcus lactis).